The sequence spans 290 residues: Agmatinase (290 aa).

6 residues coordinate Mn(2+): His-112, Asp-135, His-137, Asp-139, Asp-216, and Asp-218.

It belongs to the arginase family. Agmatinase subfamily. It depends on Mn(2+) as a cofactor.

The catalysed reaction is agmatine + H2O = urea + putrescine. The protein operates within amine and polyamine biosynthesis; putrescine biosynthesis via agmatine pathway; putrescine from agmatine: step 1/1. Its function is as follows. Catalyzes the formation of putrescine from agmatine. The protein is Agmatinase (speB) of Bacillus subtilis (strain 168).